The following is a 73-amino-acid chain: MRRFFTTLLLLPVYFYKYCISLMTPASCRYTPTCSEYAVQALKKYGPVKGLYLAVKRILRCHPWGGSGYDPVP.

Belongs to the UPF0161 family.

It localises to the cell inner membrane. Functionally, could be involved in insertion of integral membrane proteins into the membrane. The polypeptide is Putative membrane protein insertion efficiency factor (Parabacteroides distasonis (strain ATCC 8503 / DSM 20701 / CIP 104284 / JCM 5825 / NCTC 11152)).